A 125-amino-acid chain; its full sequence is Phosphoribosyl-AMP cyclohydrolase (125 aa).

A Mg(2+)-binding site is contributed by aspartate 74. Residue cysteine 75 participates in Zn(2+) binding. The Mg(2+) site is built by aspartate 76 and aspartate 78. Zn(2+) contacts are provided by cysteine 92 and cysteine 99.

This sequence belongs to the PRA-CH family. As to quaternary structure, homodimer. Mg(2+) serves as cofactor. Zn(2+) is required as a cofactor.

The protein localises to the cytoplasm. It catalyses the reaction 1-(5-phospho-beta-D-ribosyl)-5'-AMP + H2O = 1-(5-phospho-beta-D-ribosyl)-5-[(5-phospho-beta-D-ribosylamino)methylideneamino]imidazole-4-carboxamide. The protein operates within amino-acid biosynthesis; L-histidine biosynthesis; L-histidine from 5-phospho-alpha-D-ribose 1-diphosphate: step 3/9. Its function is as follows. Catalyzes the hydrolysis of the adenine ring of phosphoribosyl-AMP. In Geobacter sp. (strain M21), this protein is Phosphoribosyl-AMP cyclohydrolase.